We begin with the raw amino-acid sequence, 268 residues long: Adenosylcobinamide-GDP ribazoletransferase (268 aa).

The next 8 membrane-spanning stretches (helical) occupy residues 1 to 21, 36 to 56, 59 to 79, 112 to 132, 138 to 158, 182 to 202, 212 to 232, and 244 to 264; these read MAGNLLNGLRAAIAFLTTLPV, YLFIPVAIVTGLLLGVAGTLF, ILPAPFAAVLTVACIFLLTGI, AGGLLFMAMDLLFLFALAMTF, WLFVPLLVAEGCAKVAQITII, LAAVIGAWIAIGIAIIGAAII, IMAGGLAMLSPLAVALIILII, and VIGAANEIARIAALGVMGAVL.

It belongs to the CobS family. It depends on Mg(2+) as a cofactor.

The protein resides in the cell membrane. It carries out the reaction alpha-ribazole + adenosylcob(III)inamide-GDP = adenosylcob(III)alamin + GMP + H(+). It catalyses the reaction alpha-ribazole 5'-phosphate + adenosylcob(III)inamide-GDP = adenosylcob(III)alamin 5'-phosphate + GMP + H(+). It participates in cofactor biosynthesis; adenosylcobalamin biosynthesis; adenosylcobalamin from cob(II)yrinate a,c-diamide: step 7/7. In terms of biological role, joins adenosylcobinamide-GDP and alpha-ribazole to generate adenosylcobalamin (Ado-cobalamin). Also synthesizes adenosylcobalamin 5'-phosphate from adenosylcobinamide-GDP and alpha-ribazole 5'-phosphate. The protein is Adenosylcobinamide-GDP ribazoletransferase of Methanocella arvoryzae (strain DSM 22066 / NBRC 105507 / MRE50).